Reading from the N-terminus, the 423-residue chain is MGVDLRQVVAGILTITMFVMLGQMLHRDYFDAVQEKVQGDAHDIEFHGSKVAVEDGLVRAFEAGTKGPWMEDSHELKPCWSISQSDEAVSSKGYVTFSLTNGPEYHVSQITDAVMVAKHLGATLVLPDIRGSKPGDEMKFEDIYDVDKLIKTLESVVKVVRKLPSHVSLRDIAIVKVPTRVAEDYIKEHIDPIFKSKGNIRVTTYFPSVNLRKSSQGAETDPVSCLAMFGSLELQPAVNELVESMIQRLKTHSKKSGGRFIAIDLRVEILEKKNCHETGAVGSKTCYNAQEIALFLRKLGFDSDTTIYLTQPRWESSLNILKDIFPKTYTKEAIMPSDKKTKYLELENSEYENVIDFYISSRSDVFVPAIPGLFYANTVGKRIALGKPQVLVPAEISGTSGLPANYISPYISKKNHLAYSCFC.

Residues 1-6 are Cytoplasmic-facing; the sequence is MGVDLR. A helical; Signal-anchor for type II membrane protein transmembrane segment spans residues 7–26; sequence QVVAGILTITMFVMLGQMLH. Over 27 to 423 the chain is Lumenal; that stretch reads RDYFDAVQEK…KNHLAYSCFC (397 aa). Position 264 to 266 (264 to 266) interacts with substrate; it reads DLR.

It belongs to the glycosyltransferase GT106 family. Widely expressed.

Its subcellular location is the golgi apparatus membrane. The protein operates within glycan biosynthesis. Functionally, glycosyltransferase involved in mannan biosynthesis. The sequence is that of Protein MANNAN SYNTHESIS-RELATED 2 from Arabidopsis thaliana (Mouse-ear cress).